A 113-amino-acid chain; its full sequence is Large ribosomal subunit protein bL19 (113 aa).

This sequence belongs to the bacterial ribosomal protein bL19 family.

Its function is as follows. This protein is located at the 30S-50S ribosomal subunit interface and may play a role in the structure and function of the aminoacyl-tRNA binding site. The protein is Large ribosomal subunit protein bL19 of Carboxydothermus hydrogenoformans (strain ATCC BAA-161 / DSM 6008 / Z-2901).